The chain runs to 360 residues: GDSL esterase/lipase At1g58430 (360 aa).

An N-terminal signal peptide occupies residues M1–A23. N22 carries an N-linked (GlcNAc...) asparagine glycan. Catalysis depends on S42, which acts as the Nucleophile. N-linked (GlcNAc...) asparagine glycosylation is found at N104 and N326. Active-site residues include D334 and H337.

This sequence belongs to the 'GDSL' lipolytic enzyme family.

It is found in the secreted. The chain is GDSL esterase/lipase At1g58430 from Arabidopsis thaliana (Mouse-ear cress).